Reading from the N-terminus, the 151-residue chain is Macrodomain Ter protein (151 aa).

It belongs to the MatP family. Homodimer.

It is found in the cytoplasm. Required for spatial organization of the terminus region of the chromosome (Ter macrodomain) during the cell cycle. Prevents early segregation of duplicated Ter macrodomains during cell division. Binds specifically to matS, which is a 13 bp signature motif repeated within the Ter macrodomain. This is Macrodomain Ter protein from Enterobacter sp. (strain 638).